The chain runs to 633 residues: tRNA uridine 5-carboxymethylaminomethyl modification enzyme MnmG (633 aa).

FAD contacts are provided by residues 13 to 18 (GGGHAG), V125, and S180. Residue 273-287 (GPRYCPSIEDKITRF) participates in NAD(+) binding. Q370 serves as a coordination point for FAD.

Belongs to the MnmG family. Homodimer. Heterotetramer of two MnmE and two MnmG subunits. It depends on FAD as a cofactor.

Its subcellular location is the cytoplasm. Functionally, NAD-binding protein involved in the addition of a carboxymethylaminomethyl (cmnm) group at the wobble position (U34) of certain tRNAs, forming tRNA-cmnm(5)s(2)U34. The protein is tRNA uridine 5-carboxymethylaminomethyl modification enzyme MnmG of Alteromonas mediterranea (strain DSM 17117 / CIP 110805 / LMG 28347 / Deep ecotype).